Consider the following 337-residue polypeptide: GDP-mannose transporter 1 (337 aa).

Residues 1-16 (MSELKTGHAGHNPWAS) lie on the Cytoplasmic side of the membrane. The chain crosses the membrane as a helical span at residues 17–37 (VANSGPISILSYCGSSILMTV). The Lumenal segment spans residues 38–51 (TNKFVVNLKDFNMN). Residues 52 to 72 (FVMLFVQSLVCTITLIILRIL) traverse the membrane as a helical segment. Over 73 to 92 (GYAKFRSLNKTDAKNWFPIS) the chain is Cytoplasmic. A helical membrane pass occupies residues 93 to 113 (FLLVLMIYTSSKALQYLAVPI). Over 114 to 119 (YTIFKN) the chain is Lumenal. Residue N119 is glycosylated (N-linked (GlcNAc...) asparagine). Residues 120-140 (LTIILIAYGEVLFFGGSVTSM) form a helical membrane-spanning segment. The Cytoplasmic portion of the chain corresponds to 141 to 144 (ELSS). The chain crosses the membrane as a helical span at residues 145–165 (FLLMVLSSVVATWGDQQAVAA). Residues 166–180 (KAASLAEGAAGAVAS) lie on the Lumenal side of the membrane. The chain crosses the membrane as a helical span at residues 181–201 (FNPGYFWMFTNCITSALFVLI). The Cytoplasmic segment spans residues 202–215 (MRKRIKLTNFKDFD). The helical transmembrane segment at 216–236 (TMFYNNVLALPILLLFSFCVE) threads the bilayer. The Lumenal portion of the chain corresponds to 237–252 (DWSSVNLTNNFSNDSL). N-linked (GlcNAc...) asparagine glycans are attached at residues N242, N246, and N249. A helical transmembrane segment spans residues 253–273 (TAMIISGVASVGISYCSGWCV). Over 274 to 279 (RVTSST) the chain is Cytoplasmic. The chain crosses the membrane as a helical span at residues 280 to 300 (TYSMVGALNKLPIALSGLIFF). At 301 to 304 (DAPR) the chain is on the lumenal side. A helical membrane pass occupies residues 305-325 (NFLSILSIFIGFLSGIIYAVA). The Cytoplasmic segment spans residues 326–337 (KQKKQQAQPLRK).

Belongs to the TPT transporter family. SLC35D subfamily. As to quaternary structure, homooligomer.

It is found in the golgi apparatus membrane. The protein resides in the cytoplasmic vesicle membrane. Its subcellular location is the endoplasmic reticulum membrane. Involved in the import of GDP-mannose from the cytoplasm into the Golgi lumen. Defective copy causes severe glycosylation defect and abnormal retention of soluble endoplasmic reticulum proteins. Involved in vanadate sensitivity. The sequence is that of GDP-mannose transporter 1 (VRG4) from Saccharomyces cerevisiae (strain YJM789) (Baker's yeast).